We begin with the raw amino-acid sequence, 478 residues long: Multidrug resistance outer membrane protein MdtQ (478 aa).

Positions 1–21 are cleaved as a signal peptide; it reads MNRDSFYPAIACFPLLLMLAG. Cys22 is lipidated: N-palmitoyl cysteine. Cys22 carries the S-diacylglycerol cysteine lipid modification.

It belongs to the outer membrane factor (OMF) (TC 1.B.17) family.

The protein localises to the cell outer membrane. In terms of biological role, could be involved in resistance to puromycin, acriflavine and tetraphenylarsonium chloride. The sequence is that of Multidrug resistance outer membrane protein MdtQ (mdtQ) from Escherichia coli O157:H7.